The sequence spans 335 residues: Glycerol-3-phosphate dehydrogenase [NAD(P)+] (335 aa).

Positions 11, 31, and 107 each coordinate NADPH. Sn-glycerol 3-phosphate contacts are provided by Lys-107 and Gly-135. Residue Ala-139 participates in NADPH binding. Residues Lys-190, Asp-245, Ser-255, Arg-256, and Asn-257 each coordinate sn-glycerol 3-phosphate. Lys-190 (proton acceptor) is an active-site residue. Arg-256 provides a ligand contact to NADPH. NADPH contacts are provided by Leu-280 and Glu-282.

This sequence belongs to the NAD-dependent glycerol-3-phosphate dehydrogenase family.

It localises to the cytoplasm. It carries out the reaction sn-glycerol 3-phosphate + NAD(+) = dihydroxyacetone phosphate + NADH + H(+). The enzyme catalyses sn-glycerol 3-phosphate + NADP(+) = dihydroxyacetone phosphate + NADPH + H(+). It participates in membrane lipid metabolism; glycerophospholipid metabolism. Its function is as follows. Catalyzes the reduction of the glycolytic intermediate dihydroxyacetone phosphate (DHAP) to sn-glycerol 3-phosphate (G3P), the key precursor for phospholipid synthesis. This chain is Glycerol-3-phosphate dehydrogenase [NAD(P)+], found in Anaplasma marginale (strain St. Maries).